The following is a 135-amino-acid chain: Centromere protein S (135 aa).

The interval 103–135 (SLEQKEKKKKKSVSGGNVSRNSDMDTVVPESKD) is disordered.

Belongs to the TAF9 family. CENP-S/MHF1 subfamily. Heterodimer with CENPX, sometimes called MHF; this interaction stabilizes both partners. MHF heterodimers can assemble to form tetrameric structures. MHF also coassemble with CENPT-CENPW heterodimers at centromeres to form the tetrameric CENP-T-W-S-X complex. Forms a discrete complex with FANCM and CENPX, called FANCM-MHF; this interaction, probably mediated by direct binding between CENPS and FANCM, leads to synergistic activation of double-stranded DNA binding and strongly stimulates FANCM-mediated DNA remodeling. Recruited by FANCM to the Fanconi anemia (FA) core complex, which consists of CENPS, CENPX, FANCA, FANCB, FANCC, FANCE, FANCF, FANCG, FANCL, FANCM, FAAP24 and FAAP100. The FA core complex associates with Bloom syndrome (BLM) complex, which consists of at least BLM, DNA topoisomerase 3-alpha (TOP3A), RMI1/BLAP75, RPA1/RPA70 and RPA2/RPA32. The super complex between FA and BLM is called BRAFT. Component of the CENPA-CAD complex, composed of CENPI, CENPK, CENPL, CENPO, CENPP, CENPQ, CENPR and CENPS. The CENPA-CAD complex is probably recruited on centromeres by the CENPA-NAC complex, at least composed of CENPA, CENPC, CENPH, CENPM, CENPN, CENPT and CENPU.

Its subcellular location is the nucleus. It is found in the chromosome. The protein resides in the centromere. The protein localises to the kinetochore. Its function is as follows. DNA-binding component of the Fanconi anemia (FA) core complex. Required for the normal activation of the FA pathway, leading to monoubiquitination of the FANCI-FANCD2 complex in response to DNA damage, cellular resistance to DNA cross-linking drugs, and prevention of chromosomal breakage. In complex with CENPX (MHF heterodimer), crucial cofactor for FANCM in both binding and ATP-dependent remodeling of DNA. Stabilizes FANCM. In complex with CENPX and FANCM (but not other FANC proteins), rapidly recruited to blocked forks and promotes gene conversion at blocked replication forks. In complex with CENPT, CENPW and CENPX (CENP-T-W-S-X heterotetramer), involved in the formation of a functional kinetochore outer plate, which is essential for kinetochore-microtubule attachment and faithful mitotic progression. As a component of MHF and CENP-T-W-S-X complexes, binds DNA and bends it to form a nucleosome-like structure. DNA-binding function is fulfilled in the presence of CENPX, with the following preference for DNA substates: Holliday junction &gt; double-stranded &gt; splay arm &gt; single-stranded. Does not bind DNA on its own. The polypeptide is Centromere protein S (cenps) (Xenopus laevis (African clawed frog)).